Here is a 99-residue protein sequence, read N- to C-terminus: UPF0122 protein UUR10_0158 (99 aa).

Belongs to the UPF0122 family.

In terms of biological role, might take part in the signal recognition particle (SRP) pathway. This is inferred from the conservation of its genetic proximity to ftsY/ffh. May be a regulatory protein. In Ureaplasma urealyticum serovar 10 (strain ATCC 33699 / Western), this protein is UPF0122 protein UUR10_0158.